Consider the following 371-residue polypeptide: Phospho-N-acetylmuramoyl-pentapeptide-transferase (371 aa).

Transmembrane regions (helical) follow at residues tyrosine 25–glycine 45, threonine 79–leucine 99, valine 104–alanine 124, lysine 139–proline 159, leucine 179–serine 199, glycine 210–valine 230, valine 247–tyrosine 267, isoleucine 274–cysteine 294, leucine 299–valine 319, and threonine 348–leucine 368.

The protein belongs to the glycosyltransferase 4 family. MraY subfamily. Mg(2+) serves as cofactor.

It is found in the cell inner membrane. It carries out the reaction UDP-N-acetyl-alpha-D-muramoyl-L-alanyl-gamma-D-glutamyl-meso-2,6-diaminopimeloyl-D-alanyl-D-alanine + di-trans,octa-cis-undecaprenyl phosphate = di-trans,octa-cis-undecaprenyl diphospho-N-acetyl-alpha-D-muramoyl-L-alanyl-D-glutamyl-meso-2,6-diaminopimeloyl-D-alanyl-D-alanine + UMP. The protein operates within cell wall biogenesis; peptidoglycan biosynthesis. Its function is as follows. Catalyzes the initial step of the lipid cycle reactions in the biosynthesis of the cell wall peptidoglycan: transfers peptidoglycan precursor phospho-MurNAc-pentapeptide from UDP-MurNAc-pentapeptide onto the lipid carrier undecaprenyl phosphate, yielding undecaprenyl-pyrophosphoryl-MurNAc-pentapeptide, known as lipid I. The sequence is that of Phospho-N-acetylmuramoyl-pentapeptide-transferase from Caulobacter sp. (strain K31).